A 407-amino-acid polypeptide reads, in one-letter code: MRQLLPGDTVWRNIRLATMDPQQQALYGLVDNQALIVREGHICDIVPETQLPVSGDNIHDMQGRLVTPGLIDCHTHLVFAGNRAAEWEQRLNGASYQHISAQGGGINATVSATRACAEETLYLLARERMMRLASEGVTLLEIKSGYGLELATEEKLLRVAAKLAAENAIDISPTLLAAHATPAEYRDDPDGYITLVCETMIPQLWQKGLFDAVDLFCESVGFNVAQSERVLQTAKALGIPVKGHVEQLSLLGGAQLVSRYQGLSADHIEYLDEVGVAAMRDGGTVGVLLPGAFYFLRETQRPPVELLRRYQVPVAVASDFNPGTSPFCSLHLAMNMACVQFGLTPEEAWAGVTRHAARALGRQATHGQIRAGYRADFVVWDAEQPVEIVYEPGRNPLYQRVYRGQIS.

Fe(3+) is bound by residues His-74 and His-76. Positions 74 and 76 each coordinate Zn(2+). 4-imidazolone-5-propanoate contacts are provided by Arg-83, Tyr-146, and His-179. Tyr-146 provides a ligand contact to N-formimidoyl-L-glutamate. His-244 contributes to the Fe(3+) binding site. Position 244 (His-244) interacts with Zn(2+). Gln-247 provides a ligand contact to 4-imidazolone-5-propanoate. Position 319 (Asp-319) interacts with Fe(3+). Zn(2+) is bound at residue Asp-319. Residues Asn-321 and Gly-323 each coordinate N-formimidoyl-L-glutamate. 4-imidazolone-5-propanoate is bound at residue Thr-324.

The protein belongs to the metallo-dependent hydrolases superfamily. HutI family. Requires Zn(2+) as cofactor. Fe(3+) is required as a cofactor.

It localises to the cytoplasm. The catalysed reaction is 4-imidazolone-5-propanoate + H2O = N-formimidoyl-L-glutamate. Its pathway is amino-acid degradation; L-histidine degradation into L-glutamate; N-formimidoyl-L-glutamate from L-histidine: step 3/3. Its function is as follows. Catalyzes the hydrolytic cleavage of the carbon-nitrogen bond in imidazolone-5-propanoate to yield N-formimidoyl-L-glutamate. It is the third step in the universal histidine degradation pathway. In Salmonella heidelberg (strain SL476), this protein is Imidazolonepropionase.